Consider the following 457-residue polypeptide: Dolichol phosphate-mannose mannosyltransferase (457 aa).

At 1 to 12 (MKRLAKAAFSQN) the chain is on the cytoplasmic side. Residues 13-33 (SLTAPIVSTFVYLISVVRVVL) traverse the membrane as a helical segment. The Extracellular segment spans residues 34–91 (NGNWPVTSSDTAMFQHIGWMVFSGKRYYIDAWDPKPPLTLELATIIAYISNGDPHLQH). Residues 92 to 112 (TLSVVSTIVAGILLTYLISHI) form a helical membrane-spanning segment. Topologically, residues 113-120 (TSEITGNQ) are cytoplasmic. The chain crosses the membrane as a helical span at residues 121 to 141 (FAGLLSGIVFITFPVIHYSAV). The Extracellular segment spans residues 142-173 (FGYEPKYFVFLFGLGSIYLSRNPKPILSGAAA). A helical membrane pass occupies residues 174-194 (AASAGMWQFAIIFPIISFGII). The Cytoplasmic segment spans residues 195–211 (SRRKSKDLILKYVFGAT). A helical transmembrane segment spans residues 212–232 (IIAFISLLPIYLQGGLVAMTV). Topologically, residues 233-259 (EVIIAPLYAGETQSFLYRLVKGVTHLK) are extracellular. A helical transmembrane segment spans residues 260–280 (LMIPIALLGMAGILLGFLDDI). Over 281-283 (RER) the chain is Cytoplasmic. The helical transmembrane segment at 284–304 (WWVVGLLLWFCIQIFILDYDG) threads the bilayer. Topologically, residues 305-307 (ADD) are extracellular. A helical transmembrane segment spans residues 308 to 328 (LFLGIILVSMGIGFAFEKLST). Residues 329 to 337 (KYESERINS) lie on the Cytoplasmic side of the membrane. The chain crosses the membrane as a helical span at residues 338 to 358 (IVTAVVVCMLIWQVVTLGGVG). Residues 359–457 (VITNPYSYSG…EEKCGKWRLP (99 aa)) are Extracellular-facing.

The protein localises to the cell membrane. Its pathway is cell surface structure biogenesis; S-layer biogenesis. It participates in protein modification; protein glycosylation. Involved in the assembly of a N-linked pentasaccharide that decorates the S-layer glycoprotein and flagellins. Transfers mannose, the terminal pentasaccharide residue, from its dedicated dolichol phosphate carrier to the protein-bound glycan comprising the first four subunits of the N-linked pentasaccharide. This Haloferax volcanii (strain ATCC 29605 / DSM 3757 / JCM 8879 / NBRC 14742 / NCIMB 2012 / VKM B-1768 / DS2) (Halobacterium volcanii) protein is Dolichol phosphate-mannose mannosyltransferase (aglS).